The primary structure comprises 254 residues: MPQQIELRNIALQAAQPLVHGVSLTLQRGRVLALVGGSGSGKSLTCAATLGILPAGVRQTAGEILADGKPVSPYALRGIKIATIMQNPRSAFNPLHTMHTHARETCLALGKPADDATLTAAIEAVGLENAARVLKLYPFEMSGGMLQRMMIAMAVLCESPFIIADEPTTDLDVVAQARILDLLESIMQKQAPGMLLVTHDMGVVARLADDVAVMSQGKIVEQGDVETLFNAPKHTVTRSLVSAHLALYGMELAS.

Positions 2 to 241 constitute an ABC transporter domain; sequence PQQIELRNIA…PKHTVTRSLV (240 aa). Position 36 to 43 (36 to 43) interacts with ATP; sequence GGSGSGKS.

The protein belongs to the ABC transporter superfamily. Nickel importer (TC 3.A.1.5.3) family. The complex is composed of two ATP-binding proteins (NikD and NikE), two transmembrane proteins (NikB and NikC) and a solute-binding protein (NikA).

The protein localises to the cell inner membrane. The enzyme catalyses Ni(2+)(out) + ATP + H2O = Ni(2+)(in) + ADP + phosphate + H(+). Functionally, part of the ABC transporter complex NikABCDE involved in nickel import. Responsible for energy coupling to the transport system. The polypeptide is Nickel import ATP-binding protein NikD (Shigella flexneri serotype 5b (strain 8401)).